Here is a 154-residue protein sequence, read N- to C-terminus: Protein X (154 aa).

A mitochondrial targeting sequence region spans residues 68 to 117 (PCALRFTSARCMETTVNAHQILPKVLHKRTLGLPAMSTTDLEAYFKDSVF).

It belongs to the orthohepadnavirus protein X family. In terms of assembly, may form homodimer. May interact with host CEBPA, CFLAR, CREB1, DDB1, E4F1, HBXIP, HSPD1/HSP60, NFKBIA, POLR2E and SMAD4. Interacts with host SMC5-SMC6 complex and induces its degradation. Interacts with host TRPC4AP; leading to prevent ubiquitination of TRPC4AP. Interacts with host PLSCR1; this interaction promotes ubiquitination and degradation of HBx and impairs HBx-mediated cell proliferation. In terms of processing, a fraction may be phosphorylated in insect cells and HepG2 cells, a human hepatoblastoma cell line. Phosphorylated in vitro by host protein kinase C or mitogen-activated protein kinase. N-acetylated in insect cells.

It localises to the host cytoplasm. The protein localises to the host nucleus. The protein resides in the host mitochondrion. In terms of biological role, multifunctional protein that plays a role in silencing host antiviral defenses and promoting viral transcription. Does not seem to be essential for HBV infection. May be directly involved in development of cirrhosis and liver cancer (hepatocellular carcinoma). Most of cytosolic activities involve modulation of cytosolic calcium. The effect on apoptosis is controversial depending on the cell types in which the studies have been conducted. May induce apoptosis by localizing in mitochondria and causing loss of mitochondrial membrane potential. May also modulate apoptosis by binding host CFLAR, a key regulator of the death-inducing signaling complex (DISC). Promotes viral transcription by using the host E3 ubiquitin ligase DDB1 to target the SMC5-SMC6 complex to proteasomal degradation. This host complex would otherwise bind to viral episomal DNA, and prevents its transcription. Moderately stimulates transcription of many different viral and cellular transcription elements. Promoters and enhancers stimulated by HBx contain DNA binding sites for NF-kappa-B, AP-1, AP-2, c-EBP, ATF/CREB, or the calcium-activated factor NF-AT. In Homo sapiens (Human), this protein is Protein X.